The following is a 670-amino-acid chain: UvrABC system protein B (670 aa).

The Helicase ATP-binding domain occupies 51 to 433 (DGLKKGEPFQ…SSRVVEQIIR (383 aa)). Position 64–71 (64–71 (GVTGSGKT)) interacts with ATP. A Beta-hairpin motif is present at residues 117–140 (YYDYYQPESYLPAKDQYIEKDAMI). A Helicase C-terminal domain is found at 453 to 612 (DVMQEIRKIV…IVPTTIRKPI (160 aa)). A UVR domain is found at 631–666 (PNVIIELDAEMREAADRLDFERAIQVRELIKKLEKE).

This sequence belongs to the UvrB family. As to quaternary structure, forms a heterotetramer with UvrA during the search for lesions. Interacts with UvrC in an incision complex.

It localises to the cytoplasm. In terms of biological role, the UvrABC repair system catalyzes the recognition and processing of DNA lesions. A damage recognition complex composed of 2 UvrA and 2 UvrB subunits scans DNA for abnormalities. Upon binding of the UvrA(2)B(2) complex to a putative damaged site, the DNA wraps around one UvrB monomer. DNA wrap is dependent on ATP binding by UvrB and probably causes local melting of the DNA helix, facilitating insertion of UvrB beta-hairpin between the DNA strands. Then UvrB probes one DNA strand for the presence of a lesion. If a lesion is found the UvrA subunits dissociate and the UvrB-DNA preincision complex is formed. This complex is subsequently bound by UvrC and the second UvrB is released. If no lesion is found, the DNA wraps around the other UvrB subunit that will check the other stand for damage. The chain is UvrABC system protein B from Methanosarcina mazei (strain ATCC BAA-159 / DSM 3647 / Goe1 / Go1 / JCM 11833 / OCM 88) (Methanosarcina frisia).